Consider the following 308-residue polypeptide: MARTDNDTWDLASSVGATATMVAAARAVATRAPDAVIDDPFAEPLVRAVGVDFFTRLATGDLTPTDLDPDATGGAGNMDRFADGMAARTRFFDDFFSDAADAGVRQAVILASGLDSRAYRLPWPAGTVVFEIDQPGVITFKSDTLARLGAKPTAVHRTVPVDLRDDWIGALEAAGFDRTEPSAWIAEGLFGYLPPEAQDRLLDQITELSPPGSRLAVEGVVSSPDADDEQIRERMQAVRDQWRQFGFDLDFSELVYTGERAEVAAYLGDRGWRTDSITATALLEKCGLQSAEDSSANFADVRYVTAVK.

S-adenosyl-L-methionine-binding positions include D133 and 162 to 163; that span reads DL.

The protein belongs to the UPF0677 family.

In terms of biological role, exhibits S-adenosyl-L-methionine-dependent methyltransferase activity. This chain is Putative S-adenosyl-L-methionine-dependent methyltransferase Mmcs_1045, found in Mycobacterium sp. (strain MCS).